The primary structure comprises 406 residues: MSASQDSRSRDNGPDGMEPEGVIESNWNEIVDSFDDMNLSESLLRGIYAYGFEKPSAIQQRAILPCIKGYDVIAQAQSGTGKTATFAISILQQIELDLKATQALVLAPTRELAQQIQKVVMALGDYMGASCHACIGGTNVRAEVQKLQMEAPHIIVGTPGRVFDMLNRRYLSPKYIKMFVLDEADEMLSRGFKDQIYDIFQKLNSNTQVVLLSATMPSDVLEVTKKFMRDPIRILVKKEELTLEGIRQFYINVEREEWKLDTLCDLYETLTITQAVIFINTRRKVDWLTEKMHARDFTASAMHGDMDQKERDVIMREFRSGSSRVLITTDLLARGIDVQQVSLVINYDLPTNRENYIHRIGRGGRFGRKGVAINMVTEEDKRTLRDIETFYNTSIEEMPLNVADLI.

Residues 1–21 (MSASQDSRSRDNGPDGMEPEG) are disordered. Residue Ser-2 is modified to N-acetylserine. A Phosphoserine modification is found at Ser-4. The Q motif signature appears at 32–60 (DSFDDMNLSESLLRGIYAYGFEKPSAIQQ). Residues 63-234 (ILPCIKGYDV…KKFMRDPIRI (172 aa)) enclose the Helicase ATP-binding domain. ATP is bound at residue 76 to 83 (AQSGTGKT). Lys-118 carries the post-translational modification N6-acetyllysine. Lys-146 is covalently cross-linked (Glycyl lysine isopeptide (Lys-Gly) (interchain with G-Cter in SUMO2)). A Phosphothreonine modification is found at Thr-158. Position 174 is an N6-acetyllysine (Lys-174). The DEAD box motif lies at 182–185 (DEAD). Lys-193 bears the N6-acetyllysine mark. A Glycyl lysine isopeptide (Lys-Gly) (interchain with G-Cter in SUMO2) cross-link involves residue Lys-225. An N6-acetyllysine; alternate modification is found at Lys-238. Lys-238 participates in a covalent cross-link: Glycyl lysine isopeptide (Lys-Gly) (interchain with G-Cter in SUMO2); alternate. The region spanning 245–406 (GIRQFYINVE…EMPLNVADLI (162 aa)) is the Helicase C-terminal domain. Glycyl lysine isopeptide (Lys-Gly) (interchain with G-Cter in SUMO2) cross-links involve residues Lys-309, Lys-369, and Lys-381.

This sequence belongs to the DEAD box helicase family. eIF4A subfamily. As to quaternary structure, eIF4F is a multi-subunit complex, the composition of which varies with external and internal environmental conditions. It is composed of at least EIF4A, EIF4E and EIF4G1/EIF4G3. Interacts with PAIP1, EIF4E and UPF2. Found in a complex with XPO7, EIF4A1, ARHGAP1, VPS26A, VPS29, VPS35 and SFN. May interact with NOM1. Interacts with PDCD4; this interferes with the interaction between EIF4A and EIF4G. Interacts with RBM4. Interacts with DDX3X in an RNA-independent manner. Interacts with PKP1 (via N-terminus); the interaction promotes EIF4A1 recruitment to the cap-dependent translation complex and EIF4A1 ATPase activity.

It localises to the cytoplasm. It is found in the perinuclear region. The protein resides in the cell membrane. The protein localises to the stress granule. It catalyses the reaction ATP + H2O = ADP + phosphate + H(+). ATP-dependent RNA helicase which is a subunit of the eIF4F complex involved in cap recognition and is required for mRNA binding to ribosome. In the current model of translation initiation, eIF4A unwinds RNA secondary structures in the 5'-UTR of mRNAs which is necessary to allow efficient binding of the small ribosomal subunit, and subsequent scanning for the initiator codon. As a result, promotes cell proliferation and growth. In Macaca fascicularis (Crab-eating macaque), this protein is Eukaryotic initiation factor 4A-I (EIF4A1).